A 200-amino-acid chain; its full sequence is Octanoyltransferase (200 aa).

The region spanning Gly-27–Arg-200 is the BPL/LPL catalytic domain. Substrate-binding positions include Arg-66 to His-73, Ser-134 to Gly-136, and Gly-147 to Ala-149. Cys-165 acts as the Acyl-thioester intermediate in catalysis.

This sequence belongs to the LipB family.

It is found in the cytoplasm. The enzyme catalyses octanoyl-[ACP] + L-lysyl-[protein] = N(6)-octanoyl-L-lysyl-[protein] + holo-[ACP] + H(+). Its pathway is protein modification; protein lipoylation via endogenous pathway; protein N(6)-(lipoyl)lysine from octanoyl-[acyl-carrier-protein]: step 1/2. In terms of biological role, catalyzes the transfer of endogenously produced octanoic acid from octanoyl-acyl-carrier-protein onto the lipoyl domains of lipoate-dependent enzymes. Lipoyl-ACP can also act as a substrate although octanoyl-ACP is likely to be the physiological substrate. This chain is Octanoyltransferase, found in Dichelobacter nodosus (strain VCS1703A).